We begin with the raw amino-acid sequence, 199 residues long: FMN-dependent NADH:quinone oxidoreductase 2 (199 aa).

FMN is bound by residues serine 10, 16–18 (SVS), and 96–99 (MYNF).

It belongs to the azoreductase type 1 family. As to quaternary structure, homodimer. The cofactor is FMN.

It carries out the reaction 2 a quinone + NADH + H(+) = 2 a 1,4-benzosemiquinone + NAD(+). It catalyses the reaction N,N-dimethyl-1,4-phenylenediamine + anthranilate + 2 NAD(+) = 2-(4-dimethylaminophenyl)diazenylbenzoate + 2 NADH + 2 H(+). Quinone reductase that provides resistance to thiol-specific stress caused by electrophilic quinones. Its function is as follows. Also exhibits azoreductase activity. Catalyzes the reductive cleavage of the azo bond in aromatic azo compounds to the corresponding amines. This is FMN-dependent NADH:quinone oxidoreductase 2 from Pseudomonas fluorescens (strain ATCC BAA-477 / NRRL B-23932 / Pf-5).